Reading from the N-terminus, the 886-residue chain is KH domain-containing protein hrpk-2 (886 aa).

The span at 359–368 (DNHFYNDKDS) shows a compositional bias: basic and acidic residues. Residues 359–433 (DNHFYNDKDS…SHRKESACVD (75 aa)) form a disordered region. Basic residues-rich tracts occupy residues 369–388 (GKHH…KKHY) and 415–425 (HERKKRQRSSH). KH domains follow at residues 698 to 761 (KETV…IEKI) and 775 to 839 (PGIF…AYLT).

The polypeptide is KH domain-containing protein hrpk-2 (Caenorhabditis elegans).